The following is a 42-amino-acid chain: Delta-hexatoxin-Ar1a (42 aa).

Cystine bridges form between C1-C15, C8-C20, C14-C31, and C16-C42.

The protein belongs to the neurotoxin 06 (delta-actx) family. As to expression, expressed by the venom gland.

The protein localises to the secreted. In terms of biological role, inhibits tetrodotoxin-sensitive voltage-gated sodium channels (Nav) by binding to site 3. It slows the inactivation, causes a prolongation of action potential duration resulting in repetitive firing in autonomic and motor nerve fibers. Does not depolarize the resting potential. Does not affect tetrodotoxin-resistant sodium channels. This lethal neurotoxin is active on both insect and mammalian voltage-gated sodium channels. This Atrax robustus (Sydney funnel-web spider) protein is Delta-hexatoxin-Ar1a.